Here is a 174-residue protein sequence, read N- to C-terminus: Peptide deformylase (174 aa).

Fe cation-binding residues include Cys98 and His140. The active site involves Glu141. Residue His144 participates in Fe cation binding.

The protein belongs to the polypeptide deformylase family. Requires Fe(2+) as cofactor.

It catalyses the reaction N-terminal N-formyl-L-methionyl-[peptide] + H2O = N-terminal L-methionyl-[peptide] + formate. Functionally, removes the formyl group from the N-terminal Met of newly synthesized proteins. Requires at least a dipeptide for an efficient rate of reaction. N-terminal L-methionine is a prerequisite for activity but the enzyme has broad specificity at other positions. The sequence is that of Peptide deformylase from Bradyrhizobium diazoefficiens (strain JCM 10833 / BCRC 13528 / IAM 13628 / NBRC 14792 / USDA 110).